The sequence spans 309 residues: Ribosomal RNA small subunit methyltransferase H (309 aa).

S-adenosyl-L-methionine is bound by residues 30–32, D50, F74, D96, and Q103; that span reads GGH.

Belongs to the methyltransferase superfamily. RsmH family.

It is found in the cytoplasm. The enzyme catalyses cytidine(1402) in 16S rRNA + S-adenosyl-L-methionine = N(4)-methylcytidine(1402) in 16S rRNA + S-adenosyl-L-homocysteine + H(+). Functionally, specifically methylates the N4 position of cytidine in position 1402 (C1402) of 16S rRNA. This is Ribosomal RNA small subunit methyltransferase H from Wigglesworthia glossinidia brevipalpis.